We begin with the raw amino-acid sequence, 171 residues long: 3-hydroxydecanoyl-[acyl-carrier-protein] dehydratase (171 aa).

The active site involves His-70.

The protein belongs to the thioester dehydratase family. FabA subfamily. As to quaternary structure, homodimer.

The protein localises to the cytoplasm. It catalyses the reaction a (3R)-hydroxyacyl-[ACP] = a (2E)-enoyl-[ACP] + H2O. It carries out the reaction (3R)-hydroxydecanoyl-[ACP] = (2E)-decenoyl-[ACP] + H2O. The catalysed reaction is (2E)-decenoyl-[ACP] = (3Z)-decenoyl-[ACP]. It functions in the pathway lipid metabolism; fatty acid biosynthesis. Functionally, necessary for the introduction of cis unsaturation into fatty acids. Catalyzes the dehydration of (3R)-3-hydroxydecanoyl-ACP to E-(2)-decenoyl-ACP and then its isomerization to Z-(3)-decenoyl-ACP. Can catalyze the dehydratase reaction for beta-hydroxyacyl-ACPs with saturated chain lengths up to 16:0, being most active on intermediate chain length. This is 3-hydroxydecanoyl-[acyl-carrier-protein] dehydratase from Shewanella pealeana (strain ATCC 700345 / ANG-SQ1).